Consider the following 1829-residue polypeptide: Unconventional myosin-Va (1829 aa).

The 53-residue stretch at 8–60 folds into the Myosin N-terminal SH3-like domain; the sequence is TKYARVWIPDPEEVWKSAELLKDYKPGDKVLQLRLEEGKDLEYCLDPKTKELP. The region spanning 69-764 is the Myosin motor domain; the sequence is VGENDLTALS…QVAYLEKIRA (696 aa). Residue 163 to 170 participates in ATP binding; that stretch reads GESGAGKT. The segment at 599 to 635 is disordered; that stretch reads AISPTSATPSGRVPLSRTPVKPAKARPGQTSKEHKKT. The interval 644–666 is actin-binding; sequence LHLLMETLNATTPHYVRCIKPND. 6 consecutive IQ domains span residues 767 to 789, 790 to 814, 815 to 837, 838 to 862, 863 to 887, and 888 to 915; these read LRAACIRIQKTIRGWLMRKKYMR, MRRAAITIQRYVRGHQARCYATFLR, RTRAAIIIQKFQRMYVVRKRYQC, MRDATIALQALLRGYLVRNKYQMML, REHKSIIIQKHVRGWLARVHYHRTL, and KAIVYLQCCYRRMMAKRELKKLKIEARS. 2 coiled-coil regions span residues 916 to 1239 and 1315 to 1419; these read VERY…PEVT and GLKE…ELEV. Disordered stretches follow at residues 1106-1148 and 1170-1199; these read IPKP…SEKK and KQSLQDELDRKEEQALRAKAKEEERPPIRG. The segment covering 1117–1131 has biased composition (polar residues); that stretch reads THSSNESEYTFSSEI. Composition is skewed to basic and acidic residues over residues 1137–1148 and 1170–1196; these read LPLRMEEPSEKK and KQSLQDELDRKEEQALRAKAKEEERPP. A Dilute domain is found at 1508-1784; that stretch reads TSTINGIKKV…IRTIQLRLRD (277 aa). Thr-1734 is subject to Phosphothreonine.

The protein belongs to the TRAFAC class myosin-kinesin ATPase superfamily. Myosin family. As to quaternary structure, may be a homodimer, which associates with multiple calmodulin or myosin light chains. As to expression, neuronal and non-neuronal cells of the brain.

It localises to the golgi apparatus membrane. It carries out the reaction ATP + H2O = ADP + phosphate + H(+). Functionally, processive actin-based motor that can move in large steps approximating the 36-nm pseudo-repeat of the actin filament. Can hydrolyze ATP in the presence of actin, which is essential for its function as a motor protein. Involved in melanosome transport. Also mediates the transport of vesicles to the plasma membrane. May also be required for some polarization process involved in dendrite formation. The polypeptide is Unconventional myosin-Va (MYO5A) (Gallus gallus (Chicken)).